We begin with the raw amino-acid sequence, 630 residues long: PR domain zinc finger protein 5 (630 aa).

The region spanning 8–124 (DRFSLKSSRV…TDTELLIGYL (117 aa)) is the SET domain. Residues 167–190 (YACPQCESSFTSEDILAEHLQTLH) form a C2H2-type 1 zinc finger. A C2H2-type 2; atypical zinc finger spans residues 199 to 221 (FKCKNCGKKFPVKQALQRHVLQC). The C2H2-type 3; atypical zinc finger occupies 234–256 (FQCSVCNSSFSSASSFEQHQETC). 13 C2H2-type zinc fingers span residues 262 to 287 (FVCKADSCGKRLKSKDALKRHQENVH), 295 to 317 (LICSVCNKKCSSASSLQEHRKIH), 320 to 342 (FDCQECMKKFISANQLKRHMITH), 348 to 370 (YNCEICNKSFKRLDQVGAHKVIH), 376 to 398 (YKCKLCGKGFAHRNVYKNHKKTH), 404 to 426 (FQCEECKALFRTPFSLQRHLLIH), 432 to 455 (FKCHHCDATFKRKDTLNVHVQVVH), 461 to 483 (YRCELCNKAFVTPSVLRSHKKTH), 489 to 511 (KICPYCGQKFASSGTLRVHIRSH), 517 to 539 (YQCPYCEKGFSKNDGLKMHIRTH), 545 to 567 (YKCSECSKAFSQKRGLDEHKRTH), 573 to 595 (FQCDVCDLAFSLKKMLIRHKMTH), and 602 to 625 (AECQFCHKKFTRNDYLKVHMDNIH).

Belongs to the class V-like SAM-binding methyltransferase superfamily. Interacts with EHMT2/G9A, GFI1 and HDAC1. Widely expressed with highest levels in colon and ovary. Tends to be silenced in breast, colorectal, gastric and liver cancer tissues.

Its subcellular location is the nucleus. Sequence-specific DNA-binding transcription factor. Represses transcription at least in part by recruitment of the histone methyltransferase EHMT2/G9A and histone deacetylases such as HDAC1. Regulates hematopoiesis-associated protein-coding and microRNA (miRNA) genes. May regulate the expression of proteins involved in extracellular matrix development and maintenance, including fibrillar collagens, such as COL4A1 and COL11A1, connective tissue components, such as HAPLN1, and molecules regulating cell migration and adhesion, including EDIL3 and TGFB2. May cause G2/M arrest and apoptosis in cancer cells. This is PR domain zinc finger protein 5 (PRDM5) from Homo sapiens (Human).